A 419-amino-acid chain; its full sequence is Zinc metalloproteinase-disintegrin-like atrolysin-A (419 aa).

The Peptidase M12B domain maps to 6–202; that stretch reads RYVELVIVAD…YNPQCILNEP (197 aa). Glu-9 is a Ca(2+) binding site. Residue Asn-72 is glycosylated (N-linked (GlcNAc...) asparagine). A Ca(2+)-binding site is contributed by Asp-93. Cystine bridges form between Cys-117–Cys-197, Cys-157–Cys-181, and Cys-159–Cys-164. A Zn(2+)-binding site is contributed by His-142. Residue Glu-143 is part of the active site. Zn(2+) is bound by residues His-146 and His-152. Ca(2+) contacts are provided by Cys-197, Asn-200, Val-212, Asn-215, Leu-217, Glu-219, Glu-222, and Asp-225. The 87-residue stretch at 210 to 296 folds into the Disintegrin domain; that stretch reads PPVCGNELLE…DCPTDDFHRN (87 aa). Disulfide bonds link Cys-213-Cys-242, Cys-224-Cys-237, Cys-226-Cys-232, Cys-236-Cys-259, Cys-250-Cys-256, Cys-255-Cys-281, Cys-268-Cys-288, Cys-275-Cys-307, Cys-300-Cys-312, Cys-319-Cys-369, Cys-334-Cys-376, Cys-347-Cys-357, Cys-364-Cys-398, and Cys-392-Cys-403. The short motif at 274–276 is the D/ECD-tripeptide element; sequence ECD. N-linked (GlcNAc...) asparagine glycosylation is found at Asn-326, Asn-338, and Asn-342.

This sequence belongs to the venom metalloproteinase (M12B) family. P-III subfamily. P-IIIa sub-subfamily. In terms of assembly, monomer. Zn(2+) serves as cofactor. In terms of tissue distribution, expressed by the venom gland.

Its subcellular location is the secreted. The enzyme catalyses Cleavage of 3-Asn-|-Gln-4, 5-His-|-Leu-6, 10-His-|-Leu-11, 14-Ala-|-Leu-15 and 16-Tyr-|-Leu-17 in insulin B chain. Removes C-terminal Leu from small peptides.. Its function is as follows. Snake venom zinc metalloproteinase-disintegrin that causes hemorrhage by provoking the degradation of the sub-endothelial matrix proteins (fibronectin, laminin, type IV collagen, nidogen, and gelatins) and disturbances in platelet function. The recombinant cysteine-rich domain interacts with the alpha-2/beta-1 integrin (ITGA2/ITGB1) (collagen receptor), and inhibits the platelet aggregation induced by collagen. This is Zinc metalloproteinase-disintegrin-like atrolysin-A from Crotalus atrox (Western diamondback rattlesnake).